An 808-amino-acid polypeptide reads, in one-letter code: MAEEVGETRGGEGKEKTETMAVENKLKERKISWAKLRRVDSLNLEAGRVSKTQHNNQVNWKKTLSLTFQSIGVVYGDIGTSPLYVYESTFPDKIGSKEDILGVLSLIIYTLVLLPMLKYVFIVLRANDNGDGGTFALYSLLSRYVKVSLIPNDQPEDTQLSNYKLEIPSNQLKRSEKIKEKMENSKNIKILLFLVTILGTSMVIGDGVLTPCISVLSAVSGIGSLGQDAVVGISIAILIVLFCAQRLGTDKVGFSFAPIILLWFSFIGGIGLYNLFKYDVSVLRAFNPKYMFDYFKRNGKQGWISLGGVVLAVTGTEAMFADLGHFNVQAIQISFSGIVFPALLCAYAGQAAYLTKFPDDVSKTFYKSIPDPLYWPTFVVAVAAAIIASQAMISGAFAIISQSLSLGCFPRVKVIHTSAKYEGQVYIPEVNYILMIACIMVCLGFKTTEKIGNAYGIAVVAVMVITTCMVTIIMLVVWRTKMIWIAFFFFGFICIEAVYLSSVLYKFKDGGFLPLAFSFFLMIIMGIWHYIHKERYMYELKNKVSREFIRELAANPNINRVPGIGLLYSELVQGVPPIFPHFIANIPSIHSVLVFVSIKSLPMSKVALEERFLFRQVEPREYRMFRCVVRYGYNDAVEEPQEFERQLVEGLKEFIRHEHFISEGGDAETVGEPENPQSSTLLAKDGKARASAVYIEESLQQPNPSRVSSGSIHSNSGIKSTKSSNGIISAPLQGSAAEEMQIVQNAMEKGVVYLLGEAEVVAEPKSSLFKKFVVNHAYNFLRRNSREGGKVLAIPRARLLRVGMTYEI.

Topologically, residues 1 to 65 (MAEEVGETRG…NQVNWKKTLS (65 aa)) are cytoplasmic. Residues 66 to 86 (LTFQSIGVVYGDIGTSPLYVY) form a helical membrane-spanning segment. Topologically, residues 87 to 102 (ESTFPDKIGSKEDILG) are extracellular. The helical transmembrane segment at 103–123 (VLSLIIYTLVLLPMLKYVFIV) threads the bilayer. Over 124 to 189 (LRANDNGDGG…EKMENSKNIK (66 aa)) the chain is Cytoplasmic. The helical transmembrane segment at 190–210 (ILLFLVTILGTSMVIGDGVLT) threads the bilayer. Residues 211–221 (PCISVLSAVSG) are Extracellular-facing. Residues 222–242 (IGSLGQDAVVGISIAILIVLF) form a helical membrane-spanning segment. The Cytoplasmic portion of the chain corresponds to 243 to 251 (CAQRLGTDK). The helical transmembrane segment at 252–272 (VGFSFAPIILLWFSFIGGIGL) threads the bilayer. Over 273–302 (YNLFKYDVSVLRAFNPKYMFDYFKRNGKQG) the chain is Extracellular. The helical transmembrane segment at 303 to 323 (WISLGGVVLAVTGTEAMFADL) threads the bilayer. Residues 324–327 (GHFN) lie on the Cytoplasmic side of the membrane. Residues 328 to 348 (VQAIQISFSGIVFPALLCAYA) form a helical membrane-spanning segment. Topologically, residues 349 to 379 (GQAAYLTKFPDDVSKTFYKSIPDPLYWPTFV) are extracellular. Residues 380-400 (VAVAAAIIASQAMISGAFAII) form a helical membrane-spanning segment. Residues 401-424 (SQSLSLGCFPRVKVIHTSAKYEGQ) are Cytoplasmic-facing. Residues 425 to 445 (VYIPEVNYILMIACIMVCLGF) form a helical membrane-spanning segment. At 446–456 (KTTEKIGNAYG) the chain is on the extracellular side. Residues 457 to 477 (IAVVAVMVITTCMVTIIMLVV) traverse the membrane as a helical segment. Residues 478 to 482 (WRTKM) lie on the Cytoplasmic side of the membrane. The helical transmembrane segment at 483–503 (IWIAFFFFGFICIEAVYLSSV) threads the bilayer. At 504–510 (LYKFKDG) the chain is on the extracellular side. Residues 511-531 (GFLPLAFSFFLMIIMGIWHYI) traverse the membrane as a helical segment. At 532 to 808 (HKERYMYELK…LLRVGMTYEI (277 aa)) the chain is on the cytoplasmic side. The tract at residues 699 to 722 (LQQPNPSRVSSGSIHSNSGIKSTK) is disordered.

It belongs to the HAK/KUP transporter (TC 2.A.72.3) family. As to expression, expressed in the roots.

The protein resides in the cell membrane. It catalyses the reaction K(+)(in) = K(+)(out). Functionally, high-affinity potassium transporter that functions under low potassium conditions. Involved in the positive regulation of salt tolerance under salt stress. This chain is Potassium transporter 5, found in Manihot esculenta (Cassava).